The following is a 403-amino-acid chain: Leu/Ile/Val-binding protein homolog 8 (403 aa).

The first 26 residues, 1–26 (MRLSRLLIGASLGVALSSTVFTAALA), serve as a signal peptide directing secretion.

This sequence belongs to the leucine-binding protein family.

Its function is as follows. Component of an amino-acid transport system. The chain is Leu/Ile/Val-binding protein homolog 8 from Brucella melitensis biotype 1 (strain ATCC 23456 / CCUG 17765 / NCTC 10094 / 16M).